Consider the following 461-residue polypeptide: Probable Xaa-Pro aminopeptidase PEPP (461 aa).

4 residues coordinate Mn(2+): aspartate 257, aspartate 268, glutamate 391, and glutamate 431.

Belongs to the peptidase M24B family. Mn(2+) serves as cofactor.

It carries out the reaction Release of any N-terminal amino acid, including proline, that is linked to proline, even from a dipeptide or tripeptide.. Its function is as follows. Catalyzes the removal of a penultimate prolyl residue from the N-termini of peptides. The sequence is that of Probable Xaa-Pro aminopeptidase PEPP (PEPP) from Colletotrichum graminicola (strain M1.001 / M2 / FGSC 10212) (Maize anthracnose fungus).